Reading from the N-terminus, the 706-residue chain is Choline transporter-like protein 2 (706 aa).

Residues 1–33 are Cytoplasmic-facing; it reads MGGERQHYYGKHGTPQKYDPTFKGPIYHRGCTD. T14 carries the phosphothreonine modification. Residues 34-54 traverse the membrane as a helical segment; that stretch reads VICCVFLLLAIVGYVAVGIIA. Residues 55 to 232 lie on the Extracellular side of the membrane; it reads WTHGDPRKVI…RIFEDYTVSW (178 aa). N187 and N200 each carry an N-linked (GlcNAc...) asparagine glycan. Residues 233-253 traverse the membrane as a helical segment; sequence YWIIIGLVIAMVLSLLFIILL. Topologically, residues 254-256 are cytoplasmic; it reads RFL. A helical membrane pass occupies residues 257–277; it reads AGIMVWVMIVMVILVLGYGIF. The Extracellular portion of the chain corresponds to 278–315; it reads HCYMEYSRLRGEAGSDISLVDLGFQTDLRVYLHLRQTW. The helical transmembrane segment at 316–336 threads the bilayer; it reads MAFMIILSILEVIIILLLIFL. The Cytoplasmic portion of the chain corresponds to 337–364; it reads RKRILIAIALIKEASRAVGYVMCSMLYP. The helical transmembrane segment at 365–385 threads the bilayer; that stretch reads LVTFLLLCLCIAYWASTAIFL. Residues 386–440 are Extracellular-facing; the sequence is STSNEAVYKIFSDTDCQAVGKTCNPENFSSSSEFHLCPGAHCQFAFYGGESTYHR. Residues 441-461 traverse the membrane as a helical segment; the sequence is ALLGLQIFNAFMFFWLANFVL. Over 462-504 the chain is Cytoplasmic; that stretch reads ALGQVTLAGAFASYYWALKKPDDLPAFPLFSAFGRALRYHTGS. The chain crosses the membrane as a helical span at residues 505–525; the sequence is LAFGSLLLAIVQIIRVMLEYL. The Extracellular portion of the chain corresponds to 526 to 563; the sequence is DQRLKAAENKFAKFLMTCLKCCFWCLEKFIKFLNRNAY. A helical membrane pass occupies residues 564-584; the sequence is IMIAIYGTNFCTSARNAFFLL. The Cytoplasmic segment spans residues 585–599; sequence MRNIIRVAVLDKVTD. Residues 600–620 traverse the membrane as a helical segment; sequence FLFLLGKLLIVGSVGILAFFF. At 621 to 638 the chain is on the extracellular side; that stretch reads FTHRIRIVQDTAPPLNYY. A helical membrane pass occupies residues 639-659; it reads WVPILTVIVGSYLIAHGFFSV. Topologically, residues 660-706 are cytoplasmic; the sequence is YGMCVDTLFLCFLEDLERNDGSMERPYFMSPTLKRLLNKTNRKPAES.

Belongs to the CTL (choline transporter-like) family. Interacts with COCH. N-glycosylated.

The protein resides in the cell membrane. It is found in the mitochondrion outer membrane. The catalysed reaction is choline(out) + n H(+)(in) = choline(in) + n H(+)(out). It catalyses the reaction ethanolamine(out) + n H(+)(in) = ethanolamine(in) + n H(+)(out). In terms of biological role, choline/H+ antiporter, mainly in mitochodria. Also acts as a low-affinity ethanolamine/H+ antiporter, regulating the supply of extracellular ethanolamine (Etn) for the CDP-Etn pathway, redistribute intracellular Etn and balance the CDP-Cho and CDP-Etn arms of the Kennedy pathway. This is Choline transporter-like protein 2 (SLC44A2) from Sus scrofa (Pig).